Here is a 462-residue protein sequence, read N- to C-terminus: MSASLLEKQSTGGAIARVGFGYQDAFVLRSLPLWLSQSAFSHIVSEALSDIEVCYFSSEKSLHVMYEAKNHSLTATEFWDEIRRFKSLFDTHPKNFIWFNLVCPSYNTAISPLISKIDRLRGVGSSYDDDSSVSVNGRSEYLDWCVGKKIDFSLAEFALDYVGFITFNSENSESIFLSEIQDTINIELLRSQVKQLKDQFKNLISRSSFGPIYRKDFENFICHALEEDRSQWLLDPIKINLSASSSQYQDLNLDISDFNGPDRAQKTSSDWNSLIKKAVSIGDFIHNSGDRRTLLIDGKQRMSTACMLGYVFSATRNFLLEIEHNGLIYRTDDHKQKEGQFFTKIEAVEPQGETEAIVAIGFPTAIGKDIDSTINEVKSLPRLNLESSHAIDNMETLNLAVREAKSALVSFKSENKLSKLHLFIKAPSVFAMVLGHRLNGICDIQLYDWVDGQYIPTAELNL.

The interval 1 to 226 (MSASLLEKQS…FENFICHALE (226 aa)) is N-terminal endonuclease domain. Catalysis depends on residues Asp-50, Glu-67, and Lys-69. Mg(2+) is bound at residue Asp-50. A C-terminal SAVED domain region spans residues 235-462 (DPIKINLSAS…QYIPTAELNL (228 aa)). Residues 299-301 (KQR), Trp-449, and Tyr-454 contribute to the 2',3',3'-c-tri-AMP site.

Belongs to the Cap4 nuclease family. A monomer in the absence of ligand, in its presence it forms oligomers. Requires a divalent metal cation as cofactor.

Its activity is regulated as follows. DNase activity is activated upon ligand binding. Inhibited by EDTA. Its function is as follows. Effector DNase of a CBASS antivirus system. CBASS (cyclic oligonucleotide-based antiphage signaling system) provides immunity against bacteriophage. The CD-NTase protein synthesizes cyclic nucleotides in response to infection; these serve as specific second messenger signals. The signals activate a diverse range of effectors, leading to bacterial cell death and thus abortive phage infection. A type II-C(AAAA) CBASS system. Functionally, binds cyclic nucleotide second messengers (synthesized by CdnD, the cognate CD-NTase in the CBASS operon). Ligand binding activates it to endonucleolytically degrade dsDNA to approximately 6 bp length fragments, with a preference for 5'-C or 5'-G cleavage site. The minor product of CdnD is the activating nucleotide; also binds the major product (2',3',3'-cyclic AMP-AMP-AMP) but is not activated by it. Only binds DNA in the presence of ligand. Is not activated by c-di-AMP, c-di-GMP, 3'3'-cyclic GMP-AMP (3'3'-cGAMP) or 3',3',3'-cyclic AMP-AMP-GMP. The protein is CD-NTase-associated protein 4 of Acinetobacter sp. (strain ATCC 27244 / 9458).